A 5875-amino-acid polypeptide reads, in one-letter code: Probable E3 ubiquitin-protein ligase DDB_G0283893 (5875 aa).

15 disordered regions span residues 17–64 (DNNN…QPPE), 164–185 (NNNN…QSNN), 232–276 (DSNN…TTTS), 302–342 (PSFK…CGNG), 642–693 (TTTT…SPPI), 716–740 (SIRS…TTNA), 1081–1101 (ITPT…TSIP), 1291–1367 (DGWE…KEST), 1806–1851 (QESE…SSPP), 1952–1982 (KKPS…KDEV), 2008–2036 (EDED…DDEE), 2109–2203 (KALK…TGSG), 2893–2930 (DSDD…TNDS), 3083–3119 (TSPS…SGSN), and 3195–3214 (LLPP…DNTN). Low complexity predominate over residues 18–52 (NNNNNNNNNNNNNNNNNNNNNNNNNNNSNNNNNKN). Basic and acidic residues predominate over residues 237–249 (DNKENKKEDKESS). 3 stretches are compositionally biased toward low complexity: residues 250 to 276 (KPIA…TTTS), 317 to 333 (TSTI…ITQP), and 642 to 656 (TTTT…TTTT). Positions 657-669 (NESIPMETTRSST) are enriched in polar residues. The span at 670–693 (PIPIVNNNNNNNDSKSNSKKSPPI) shows a compositional bias: low complexity. Polar residues predominate over residues 716 to 725 (SIRSSSNKVN). Residues 728–740 (TPKSSTTTTTTNA) are compositionally biased toward low complexity. Residues 1297 to 1330 (FNDDDDEEEDEEEEEEMDEDDSENDEDEDSEESE) show a composition bias toward acidic residues. Residues 1300–1328 (DDDEEEDEEEEEEMDEDDSENDEDEDSEE) are a coiled coil. 2 stretches are compositionally biased toward low complexity: residues 1347–1363 (TTTT…TATT) and 1838–1851 (SNSS…SSPP). Over residues 1963–1977 (GGCHHSNHHHHHHHS) the composition is skewed to basic residues. The UBR-type zinc-finger motif lies at 2042–2113 (KVCTYTFTKN…KGNPCKALKP (72 aa)). Low complexity-rich tracts occupy residues 2118–2168 (PPKQ…TNTN) and 2178–2203 (SSSS…TGSG). The span at 2893–2903 (DSDDSDDEFPT) shows a compositional bias: acidic residues. Low complexity predominate over residues 2908 to 2917 (VTSSGLSTSA). Low complexity predominate over residues 3201 to 3211 (SSSNENVVDND). Residues 3226–3280 (EVLFSCDLCNINPITGKRWNCSNCGDFDLCNQCYQNPEKDHPKDHIFKEFIIDEP) form a ZZ-type zinc finger. Zn(2+) contacts are provided by Cys3231, Cys3234, Cys3246, Cys3249, Cys3255, Cys3258, His3266, and His3270. Disordered stretches follow at residues 3282–3312 (KDGD…QDDS), 3326–3359 (LNNN…PTTN), and 3754–3776 (SSTS…SNDI). Composition is skewed to low complexity over residues 3295 to 3307 (QQQK…LQQD) and 3327 to 3358 (NNNN…TPTT). Positions 3313–3332 (EYDEELKIAISMSLNNNNNN) constitute a UIM domain. Residues 3754–3763 (SSTSQDTQQE) are compositionally biased toward polar residues. Residues 3764 to 3774 (SSNNNNNNNSN) show a composition bias toward low complexity. Residues 4118–4146 (IENQEDHKRAIQTIEKESENAHKKYQRLI) are a coiled coil. Low complexity predominate over residues 4182 to 4222 (NTSTNSTGSNNQSINSSSGNISTNSSSSSSSSFGISNQSSS). 3 disordered regions span residues 4182–4237 (NTST…GGVI), 4295–4323 (FISG…RQCP), and 4616–4671 (KILS…FDND). Over residues 4223 to 4236 (GNGGGGVGSGGGGV) the composition is skewed to gly residues. The span at 4308-4317 (QQQQQQQQQQ) shows a compositional bias: low complexity. A coiled-coil region spans residues 4585–4618 (QIQQQIALQQQQIQQQIQQQQQQLNESVSGLKIL). Low complexity-rich tracts occupy residues 4619 to 4635 (SPSS…ATGS) and 4645 to 4659 (SSGS…ISSS). A UBR4 E3 catalytic module region spans residues 5357–5870 (PALPFVLVLL…EYLLKLYKSV (514 aa)). The HemiRING-type zinc finger occupies 5476-5620 (GFTCMVCREG…WVNLNNISRV (145 aa)). Residues Cys5479, Cys5482, His5554, and Cys5557 each coordinate Zn(2+). In terms of domain architecture, UZI spans 5623 to 5870 (PKFRILSHDL…EYLLKLYKSV (248 aa)). Positions 5819–5846 (QVDVKELLNCFENELKEFQDEMEFFDDE) form a coiled coil.

This sequence belongs to the UBR4 family.

It participates in protein modification; protein ubiquitination. In terms of biological role, probable E3 ubiquitin-protein ligase. The sequence is that of Probable E3 ubiquitin-protein ligase DDB_G0283893 from Dictyostelium discoideum (Social amoeba).